The primary structure comprises 182 residues: NADH-quinone oxidoreductase subunit 9 (182 aa).

4Fe-4S ferredoxin-type domains lie at Leu-43–Ala-73 and Lys-89–Asp-118. Residues Cys-53, Cys-56, Ser-57, Cys-59, Cys-63, Cys-98, Ile-99, Cys-101, Cys-104, and Cys-108 each coordinate [4Fe-4S] cluster.

Belongs to the complex I 23 kDa subunit family. In terms of assembly, NDH-1 is composed of 15 different subunits, Nqo1 to Nqo15. The complex has a L-shaped structure, with the hydrophobic arm (subunits Nqo7, Nqo8 and Nqo10 to Nqo14) embedded in the membrane and the hydrophilic peripheral arm (subunits Nqo1 to Nqo6, Nqo9 and Nqo15) protruding into the bacterial cytoplasm. The hydrophilic domain contains all the redox centers. [4Fe-4S] cluster is required as a cofactor.

Its subcellular location is the cell membrane. It catalyses the reaction a quinone + NADH + 5 H(+)(in) = a quinol + NAD(+) + 4 H(+)(out). Its function is as follows. NDH-1 shuttles electrons from NADH, via FMN and iron-sulfur (Fe-S) centers, to quinones in the respiratory chain. The immediate electron acceptor for the enzyme in this species is menaquinone. Couples the redox reaction to proton translocation (for every two electrons transferred, four hydrogen ions are translocated across the cytoplasmic membrane), and thus conserves the redox energy in a proton gradient required for the synthesis of ATP. The role of the Nqo9 subunit appears to provide a 'connecting chain' of two clusters between cluster N5 and the terminal cluster N2, and to stabilize the structure of the complex by interacting with other subunits. The chain is NADH-quinone oxidoreductase subunit 9 (nqo9) from Thermus thermophilus (strain ATCC 27634 / DSM 579 / HB8).